We begin with the raw amino-acid sequence, 91 residues long: UPF0250 protein PSEEN4821 (91 aa).

It belongs to the UPF0250 family.

This Pseudomonas entomophila (strain L48) protein is UPF0250 protein PSEEN4821.